The following is a 207-amino-acid chain: Ubiquinol-cytochrome c reductase iron-sulfur subunit (207 aa).

Residues 24-44 (LVAATSVVGAVGAGYALVPFV) form a helical membrane-spanning segment. Positions 100 to 199 (PKLVDPTSEV…HVYLNDTTIL (100 aa)) constitute a Rieske domain. C134, H136, C162, and H165 together coordinate [2Fe-2S] cluster. A disulfide bridge links C139 with C164.

In terms of assembly, the main subunits of complex b-c1 are: cytochrome b, cytochrome c1 and the Rieske protein. [2Fe-2S] cluster is required as a cofactor.

Its subcellular location is the cell membrane. It carries out the reaction a quinol + 2 Fe(III)-[cytochrome c](out) = a quinone + 2 Fe(II)-[cytochrome c](out) + 2 H(+)(out). Functionally, component of the ubiquinol-cytochrome c reductase complex (complex III or cytochrome b-c1 complex), which is a respiratory chain that generates an electrochemical potential coupled to ATP synthesis. The chain is Ubiquinol-cytochrome c reductase iron-sulfur subunit (petA) from Allochromatium vinosum (strain ATCC 17899 / DSM 180 / NBRC 103801 / NCIMB 10441 / D) (Chromatium vinosum).